We begin with the raw amino-acid sequence, 294 residues long: Gap junction delta-3 protein (294 aa).

Residues 1–24 (MGEWAFLGSLLDAVQLQSPLVGRL) are Cytoplasmic-facing. The helical transmembrane segment at 25–45 (WLVVMLIFRILVLATVGGAVF) threads the bilayer. At 46 to 76 (EDEQEEFVCNTLQPGCRQTCYDRAFPVSHYR) the chain is on the extracellular side. Residues 77–97 (FWLFHILLLSAPPVLFVVYSM) traverse the membrane as a helical segment. Over 98–136 (HRAGKEAGGAEAAAQCAPGLPEAQCAPCALRARRARRCY) the chain is Cytoplasmic. A helical membrane pass occupies residues 137 to 157 (LLSVALRLLAELTFLGGQALL). Residues 158–188 (YGFRVAPHFACAGPPCPHTVDCFVSRPTEKT) lie on the Extracellular side of the membrane. The helical transmembrane segment at 189–209 (VFVLFYFAVGLLSALLSVAEL) threads the bilayer. The Cytoplasmic segment spans residues 210–294 (GHLLWKGRPR…PATGRRDLAI (85 aa)). The tract at residues 233–294 (EAQKLLPPPP…PATGRRDLAI (62 aa)) is disordered. A compositionally biased stretch (pro residues) spans 238 to 250 (LPPPPPPPPPPAL).

This sequence belongs to the connexin family. Delta-type subfamily. A connexon is composed of a hexamer of connexins. Interacts with TJP1. Expressed in vascular smooth muscle cells. Found in heart, colon, and artery (at protein level). Found in cerebral cortex, heart, liver, lung, kidney, spleen and testis.

It is found in the cell membrane. Its subcellular location is the cell junction. The protein localises to the gap junction. One gap junction consists of a cluster of closely packed pairs of transmembrane channels, the connexons, through which materials of low MW diffuse from one cell to a neighboring cell. The sequence is that of Gap junction delta-3 protein (GJD3) from Homo sapiens (Human).